Consider the following 837-residue polypeptide: Valine--tRNA ligase (837 aa).

Positions 46 to 56 (PNLTGTLHIGH) match the 'HIGH' region motif. The 'KMSKS' region signature appears at 514–518 (KMSKS). Lysine 517 contributes to the ATP binding site. A coiled-coil region spans residues 767–837 (VDDTTQRLKS…QLIAKLTKAH (71 aa)).

The protein belongs to the class-I aminoacyl-tRNA synthetase family. ValS type 1 subfamily. As to quaternary structure, monomer.

The protein resides in the cytoplasm. It carries out the reaction tRNA(Val) + L-valine + ATP = L-valyl-tRNA(Val) + AMP + diphosphate. In terms of biological role, catalyzes the attachment of valine to tRNA(Val). As ValRS can inadvertently accommodate and process structurally similar amino acids such as threonine, to avoid such errors, it has a 'posttransfer' editing activity that hydrolyzes mischarged Thr-tRNA(Val) in a tRNA-dependent manner. The polypeptide is Valine--tRNA ligase (Mycoplasma genitalium (strain ATCC 33530 / DSM 19775 / NCTC 10195 / G37) (Mycoplasmoides genitalium)).